A 104-amino-acid chain; its full sequence is MIRKAFVMQVNPDAHEEYQRRHNPIWPELEAVLKSHGAHNYAIYLDKARNLLFATIEIESEERWNAVASTDVCQRWWKYMIDVMPANADNSPVSSELQEVFYLP.

Tyrosine 18 contacts substrate. The active-site Proton donor is the histidine 22. Substrate contacts are provided by residues tyrosine 41 and 76-77; that span reads WW.

It belongs to the rhamnose mutarotase family. In terms of assembly, homodimer.

Its subcellular location is the cytoplasm. The enzyme catalyses alpha-L-rhamnose = beta-L-rhamnose. Its pathway is carbohydrate metabolism; L-rhamnose metabolism. In terms of biological role, involved in the anomeric conversion of L-rhamnose. The sequence is that of L-rhamnose mutarotase from Escherichia coli O127:H6 (strain E2348/69 / EPEC).